Here is a 543-residue protein sequence, read N- to C-terminus: Cytochrome P450 2U1 (543 aa).

A run of 4 helical transmembrane segments spans residues Pro-32–Trp-52, Gly-58–Pro-78, Val-261–Phe-281, and Leu-342–Leu-362. Cys-490 is a heme binding site. Residues Leu-495–Leu-515 traverse the membrane as a helical segment.

This sequence belongs to the cytochrome P450 family. Requires heme as cofactor.

The protein resides in the endoplasmic reticulum membrane. It is found in the microsome membrane. The protein localises to the mitochondrion inner membrane. The catalysed reaction is an omega-methyl-long-chain fatty acid + reduced [NADPH--hemoprotein reductase] + O2 = an omega-hydroxy-long-chain fatty acid + oxidized [NADPH--hemoprotein reductase] + H2O + H(+). It catalyses the reaction (5Z,8Z,11Z,14Z)-eicosatetraenoate + reduced [NADPH--hemoprotein reductase] + O2 = 19-hydroxy-(5Z,8Z,11Z,14Z)-eicosatetraenoate + oxidized [NADPH--hemoprotein reductase] + H2O + H(+). It carries out the reaction (5Z,8Z,11Z,14Z)-eicosatetraenoate + reduced [NADPH--hemoprotein reductase] + O2 = 20-hydroxy-(5Z,8Z,11Z,14Z)-eicosatetraenoate + oxidized [NADPH--hemoprotein reductase] + H2O + H(+). The enzyme catalyses N-[(5Z,8Z,11Z,14Z)-eicosatetraenoyl]-serotonin + reduced [NADPH--hemoprotein reductase] + O2 = 2-oxo-N-[(5Z,8Z,11Z,14Z)-eicosatetraenoyl]-serotonin + oxidized [NADPH--hemoprotein reductase] + H2O + H(+). Its function is as follows. A cytochrome P450 monooxygenase involved in the metabolism of arachidonic acid and its conjugates. Mechanistically, uses molecular oxygen inserting one oxygen atom into a substrate, and reducing the second into a water molecule, with two electrons provided by NADPH via cytochrome P450 reductase (CPR; NADPH-ferrihemoprotein reductase). Acts as an omega and omega-1 hydroxylase for arachidonic acid and possibly for other long chain fatty acids. May modulate the arachidonic acid signaling pathway and play a role in other fatty acid signaling processes. May down-regulate the biological activities of N-arachidonoyl-serotonin, an endocannabinoid that has anti-nociceptive effects through inhibition of fatty acid amide hydrolase FAAH, TRPV1 receptor and T-type calcium channels. Catalyzes C-2 oxidation of the indole ring of N-arachidonoyl-serotonin forming a less active product 2-oxo-N-arachidonoyl-serotonin. This is Cytochrome P450 2U1 (CYP2U1) from Bos taurus (Bovine).